The following is a 443-amino-acid chain: Phosphoglucosamine mutase (443 aa).

Residue S102 is the Phosphoserine intermediate of the active site. Positions 102, 241, 243, and 245 each coordinate Mg(2+). The residue at position 102 (S102) is a Phosphoserine.

It belongs to the phosphohexose mutase family. Mg(2+) is required as a cofactor. In terms of processing, activated by phosphorylation.

The catalysed reaction is alpha-D-glucosamine 1-phosphate = D-glucosamine 6-phosphate. Catalyzes the conversion of glucosamine-6-phosphate to glucosamine-1-phosphate. The chain is Phosphoglucosamine mutase from Acinetobacter baylyi (strain ATCC 33305 / BD413 / ADP1).